The chain runs to 627 residues: 1-deoxy-D-xylulose-5-phosphate synthase (627 aa).

Residues H87 and 128 to 130 (GHS) contribute to the thiamine diphosphate site. Mg(2+) is bound at residue D159. Residues 160-161 (GA), N188, F295, and E375 each bind thiamine diphosphate. N188 contributes to the Mg(2+) binding site.

Belongs to the transketolase family. DXPS subfamily. Homodimer. Mg(2+) is required as a cofactor. It depends on thiamine diphosphate as a cofactor.

The enzyme catalyses D-glyceraldehyde 3-phosphate + pyruvate + H(+) = 1-deoxy-D-xylulose 5-phosphate + CO2. It functions in the pathway metabolic intermediate biosynthesis; 1-deoxy-D-xylulose 5-phosphate biosynthesis; 1-deoxy-D-xylulose 5-phosphate from D-glyceraldehyde 3-phosphate and pyruvate: step 1/1. Catalyzes the acyloin condensation reaction between C atoms 2 and 3 of pyruvate and glyceraldehyde 3-phosphate to yield 1-deoxy-D-xylulose-5-phosphate (DXP). This chain is 1-deoxy-D-xylulose-5-phosphate synthase, found in Pseudomonas aeruginosa (strain LESB58).